We begin with the raw amino-acid sequence, 289 residues long: Heme oxygenase 1, chloroplastic (289 aa).

A chloroplast-targeting transit peptide spans 1–64 (MAPAAASLTA…SASSSRRMVV (64 aa)). Heme b is bound at residue His-96.

It belongs to the heme oxygenase family.

It is found in the plastid. Its subcellular location is the chloroplast. The enzyme catalyses heme b + 3 reduced [NADPH--hemoprotein reductase] + 3 O2 = biliverdin IXalpha + CO + Fe(2+) + 3 oxidized [NADPH--hemoprotein reductase] + 3 H2O + H(+). Its function is as follows. Catalyzes the opening of the heme ring to form the open-chain tetrapyrrole biliverdin IX with the release of iron and carbon monoxide (CO). Is a key enzyme in the synthesis of the chromophore of the phytochrome family of plant photoreceptors. Essential for photoperiod response and repression of flowering through cytochromes that inhibit flowering by affecting both HD1 and EHD1 flowering pathways. The polypeptide is Heme oxygenase 1, chloroplastic (HO1) (Oryza sativa subsp. japonica (Rice)).